The following is a 96-amino-acid chain: Cytochrome c2 iso-2 (96 aa).

Heme c-binding residues include C10, C13, H14, and M75.

The protein belongs to the cytochrome c family. Binds 1 heme c group covalently per subunit.

Cytochrome c2 is found mainly in purple, non-sulfur, photosynthetic bacteria where it functions as the electron donor to the oxidized bacteriochlorophyll in the photophosphorylation pathway. However, it may also have a role in the respiratory chain and is found in some non-photosynthetic bacteria. The protein is Cytochrome c2 iso-2 of Magnetospirillum fulvum (Rhodospirillum fulvum).